We begin with the raw amino-acid sequence, 186 residues long: Probable nicotinate-nucleotide adenylyltransferase (186 aa).

The protein belongs to the NadD family.

It carries out the reaction nicotinate beta-D-ribonucleotide + ATP + H(+) = deamido-NAD(+) + diphosphate. It functions in the pathway cofactor biosynthesis; NAD(+) biosynthesis; deamido-NAD(+) from nicotinate D-ribonucleotide: step 1/1. In terms of biological role, catalyzes the reversible adenylation of nicotinate mononucleotide (NaMN) to nicotinic acid adenine dinucleotide (NaAD). The polypeptide is Probable nicotinate-nucleotide adenylyltransferase (Tropheryma whipplei (strain Twist) (Whipple's bacillus)).